The following is a 241-amino-acid chain: MADS-box transcription factor 57 (241 aa).

One can recognise an MADS-box domain in the interval 1–61; that stretch reads MGRGKIVIRR…GRLYEFSSTN (61 aa). In terms of domain architecture, K-box spans 85 to 178; it reads IKIWQREAAS…LNVMSQQKLE (94 aa). Positions 216–241 are disordered; sequence LELSQSQQREGECSKTAAPELGLHLP.

As to quaternary structure, interacts with TB1. As to expression, expressed in seedling roots and shoots. Highly expressed in young leaves.

It localises to the nucleus. Its function is as follows. Transcriptional factor that targets the CArG motif 5'-C(A/T)TTAAAAAG-3' in the promoter of D14. Directly suppresses D14 expression to control the outgrowth of axillary buds. This chain is MADS-box transcription factor 57, found in Oryza sativa subsp. japonica (Rice).